We begin with the raw amino-acid sequence, 840 residues long: Heat shock 70 kDa protein 4 (840 aa).

N6-acetyllysine is present on K53. Phosphoserine is present on S76. A phosphotyrosine mark is found at Y89 and Y336. Phosphoserine is present on residues S393 and S415. Residue K430 is modified to N6-acetyllysine. Residues 500–575 (VHKSEESEEP…QAKKAKVKTS (76 aa)) are disordered. Residues 514 to 533 (QNAKEEEKMQVDQEEPHTEE) show a composition bias toward basic and acidic residues. T538 carries the post-translational modification Phosphothreonine. Position 546 is a phosphoserine (S546). At Y660 the chain carries Phosphotyrosine. S756 is modified (phosphoserine). N6-methyllysine is present on K773. A disordered region spans residues 781–840 (PIISKPKPKVEPPKEEPKHAEQNGPVDGQGDNPGTQAAEHGADTAVPSDGDKKLPEMDID). Basic and acidic residues-rich tracts occupy residues 788 to 801 (PKVEPPKEEPKHAE) and 829 to 840 (DGDKKLPEMDID).

Belongs to the heat shock protein 70 family. In terms of assembly, interacts with TJP1/ZO-1. In terms of tissue distribution, ubiquitous. Highly expressed in testis.

It localises to the cytoplasm. This Rattus norvegicus (Rat) protein is Heat shock 70 kDa protein 4 (Hspa4).